A 371-amino-acid chain; its full sequence is Carbamoyl phosphate synthase small chain (371 aa).

A CPSase region spans residues 1 to 186 (MDYYNNDTPG…IHQGKTGDVV (186 aa)). S52, G233, and G235 together coordinate L-glutamine. A Glutamine amidotransferase type-1 domain is found at 185–371 (VVVVVDCGIK…KFKKMVVGDA (187 aa)). C261 serves as the catalytic Nucleophile. Positions 262, 265, 303, 305, and 306 each coordinate L-glutamine. Residues H346 and E348 contribute to the active site.

The protein belongs to the CarA family. In terms of assembly, composed of two chains; the small (or glutamine) chain promotes the hydrolysis of glutamine to ammonia, which is used by the large (or ammonia) chain to synthesize carbamoyl phosphate. Tetramer of heterodimers (alpha,beta)4.

The enzyme catalyses hydrogencarbonate + L-glutamine + 2 ATP + H2O = carbamoyl phosphate + L-glutamate + 2 ADP + phosphate + 2 H(+). It carries out the reaction L-glutamine + H2O = L-glutamate + NH4(+). It participates in amino-acid biosynthesis; L-arginine biosynthesis; carbamoyl phosphate from bicarbonate: step 1/1. The protein operates within pyrimidine metabolism; UMP biosynthesis via de novo pathway; (S)-dihydroorotate from bicarbonate: step 1/3. In terms of biological role, small subunit of the glutamine-dependent carbamoyl phosphate synthetase (CPSase). CPSase catalyzes the formation of carbamoyl phosphate from the ammonia moiety of glutamine, carbonate, and phosphate donated by ATP, constituting the first step of 2 biosynthetic pathways, one leading to arginine and/or urea and the other to pyrimidine nucleotides. The small subunit (glutamine amidotransferase) binds and cleaves glutamine to supply the large subunit with the substrate ammonia. In Sulfolobus acidocaldarius (strain ATCC 33909 / DSM 639 / JCM 8929 / NBRC 15157 / NCIMB 11770), this protein is Carbamoyl phosphate synthase small chain.